A 238-amino-acid chain; its full sequence is MAKDTTGRLRVTVKSAGRLKLSSKLWLERQLNDPYVAQAKRDGLRSRAAYKLIEIDDKYHFLKPGIAVVDLGAAPGGWSQVAAKRVGAADGRGKVVAIDLLEMPEIVGVDFAQLDFLHAEAPAKLLSMIGGKVDVVLSDMAANTTGHRKTDQLRIVGLVEDAAAFACDVLKPGGTFVAKVFQSGADATLVTQLKRDFVTVKHVKPASSRKDSSERYVLAMGFRGVPTTHDADAPMATS.

S-adenosyl-L-methionine-binding residues include Gly-76, Trp-78, Asp-99, Asp-115, and Asp-139. Lys-179 (proton acceptor) is an active-site residue.

It belongs to the class I-like SAM-binding methyltransferase superfamily. RNA methyltransferase RlmE family.

It localises to the cytoplasm. It carries out the reaction uridine(2552) in 23S rRNA + S-adenosyl-L-methionine = 2'-O-methyluridine(2552) in 23S rRNA + S-adenosyl-L-homocysteine + H(+). Its function is as follows. Specifically methylates the uridine in position 2552 of 23S rRNA at the 2'-O position of the ribose in the fully assembled 50S ribosomal subunit. This is Ribosomal RNA large subunit methyltransferase E from Rhodopseudomonas palustris (strain BisB18).